Here is a 267-residue protein sequence, read N- to C-terminus: LexA repressor (267 aa).

The tract at residues 1–44 (MSIDESSDNPTPRPKLGRPPKSEADKRAEKEAQKDGKKPALSTR) is disordered. Positions 20 to 38 (PKSEADKRAEKEAQKDGKK) are enriched in basic and acidic residues. The H-T-H motif DNA-binding region spans 65–85 (IREIADAVGLHSTSSVSYHLT). The interval 111 to 140 (GQLTNESTKKNAGSPQPTSAAIPEPTTEGE) is disordered. Over residues 112–129 (QLTNESTKKNAGSPQPTS) the composition is skewed to polar residues. Catalysis depends on for autocatalytic cleavage activity residues S191 and K228.

It belongs to the peptidase S24 family. As to quaternary structure, homodimer.

It carries out the reaction Hydrolysis of Ala-|-Gly bond in repressor LexA.. In terms of biological role, represses a number of genes involved in the response to DNA damage (SOS response), including recA and lexA. In the presence of single-stranded DNA, RecA interacts with LexA causing an autocatalytic cleavage which disrupts the DNA-binding part of LexA, leading to derepression of the SOS regulon and eventually DNA repair. This chain is LexA repressor, found in Corynebacterium jeikeium (strain K411).